The sequence spans 39 residues: Alpha-conotoxin ArIA (39 aa).

Residues 1-17 (SDGRNVAAKAFHRIGRT) constitute a propeptide that is removed on maturation. Cystine bridges form between Cys-22–Cys-28 and Cys-23–Cys-36. The ser-Xaa-Pro motif, crucial for potent interaction with nAChR stretch occupies residues 24–26 (SNP). Residue Pro-33 is modified to 4-hydroxyproline; in ArIA.

It belongs to the conotoxin A superfamily. In terms of tissue distribution, expressed by the venom duct.

It is found in the secreted. In terms of biological role, alpha-conotoxins act on postsynaptic membranes, they bind to the nicotinic acetylcholine receptors (nAChR) and thus inhibit them. This toxin acts as a competitive inhibitor and is 3-fold more potent on alpha-7/CHRNA7 nAChRs (IC(50)=6 nM) than on alpha-3-beta-2/CHRNA3-CHRNB2 nAChR (IC(50)=18 nM). Acts as a competitive inhibitor and is 33-fold more potent on alpha-7/CHRNA7 nAChRs (IC(50)=1.8 nM) than on alpha-3-beta-2/CHRNA3-CHRNB2 nAChR (IC(50)=60.1 nM). This is Alpha-conotoxin ArIA from Conus arenatus (Sand-dusted cone).